The chain runs to 258 residues: Arylamine N-acetyltransferase 1 (258 aa).

The Acyl-thioester intermediate role is filled by cysteine 59. A substrate-binding site is contributed by 97 to 98; sequence IH. Active-site residues include histidine 98 and aspartate 113. The CoA site is built by tyrosine 199 and threonine 205.

Belongs to the arylamine N-acetyltransferase family.

Its subcellular location is the cytoplasm. It catalyses the reaction an arylamine + acetyl-CoA = an N-acetylarylamine + CoA. Functionally, participates in the detoxification of a plethora of hydrazine and arylamine drugs. This Felis catus (Cat) protein is Arylamine N-acetyltransferase 1 (NAT1).